The sequence spans 293 residues: Ribosomal protein L11 methyltransferase (293 aa).

S-adenosyl-L-methionine contacts are provided by threonine 145, glycine 166, aspartate 188, and asparagine 230.

This sequence belongs to the methyltransferase superfamily. PrmA family.

The protein resides in the cytoplasm. It carries out the reaction L-lysyl-[protein] + 3 S-adenosyl-L-methionine = N(6),N(6),N(6)-trimethyl-L-lysyl-[protein] + 3 S-adenosyl-L-homocysteine + 3 H(+). Methylates ribosomal protein L11. This chain is Ribosomal protein L11 methyltransferase, found in Shewanella sp. (strain ANA-3).